A 132-amino-acid polypeptide reads, in one-letter code: MEPISHLVKSSLPNYLSSLPVPDSLGGWFKLSFKDWLALIPPTAVLAGLGYTAYLAFCPAAQCSAKSARCNNHIRKHEAKVVDMIDVEDIAEKAAFCRCWKTKNWPYCDGSHGEHNKLTGDNVGPVVVSKKK.

The Lumenal portion of the chain corresponds to M1 to D35. Residues W36–C58 traverse the membrane as a helical segment. The Cytoplasmic portion of the chain corresponds to P59–K132. Residues C97, C99, C108, and H112 each coordinate [2Fe-2S] cluster.

The protein belongs to the CISD protein family. CISD2 subfamily. Requires [2Fe-2S] cluster as cofactor.

It localises to the endoplasmic reticulum membrane. The chain is CDGSH iron-sulfur domain-containing protein 2 homolog from Drosophila grimshawi (Hawaiian fruit fly).